Consider the following 599-residue polypeptide: Flap endonuclease GEN-like 1 (599 aa).

The tract at residues 1-96 (MGVGGNFWDL…ISRFFRSSGI (96 aa)) is N-domain. The XPG-N domain stretch occupies residues 2-95 (GVGGNFWDLL…RISRFFRSSG (94 aa)). Mg(2+)-binding residues include Asp31, Asp75, Glu140, Glu142, Asp161, Asp163, and Asp213. The tract at residues 128–213 (ELLGIPVLKA…IAISLLVGND (86 aa)) is XPG-I domain. Residues 128 to 217 (ELLGIPVLKA…LLVGNDYDSG (90 aa)) form an I-domain region. Residues 213 to 407 (DYDSGGVLGI…LLPMLSTIYL (195 aa)) are 5'-3' exonuclease domain. Disordered regions lie at residues 522 to 545 (RESKKKNVSEEETATPRATTMGVQ) and 559 to 599 (AAGQ…LLFG). Polar residues-rich tracts occupy residues 563–572 (SIETGGSSKA) and 580–590 (ATSTSSSNLTK).

This sequence belongs to the XPG/RAD2 endonuclease family. GEN subfamily. The cofactor is Mg(2+).

The protein resides in the nucleus. Functionally, endonuclease which cleaves flap structures at the junction between single-stranded DNA and double-stranded DNA with a specific cleavage site in the 5' overhang strand exactly one nucleotide 3' of the branch point. Structure- and sequence-specific nuclease that resolves holliday junctions (HJs) by symmetrically oriented incisions in two opposing strands near the junction point, thus leading to ligatable products; HJs are physical links between homologous DNA molecules that arise as central intermediary structures during homologous recombination and repair in meiotic and somatic cells. Structure-specific nuclease with 5'-flap endonuclease activity, preferentially cleaving static flaps 5' overhang strand exactly one nucleotide in the 3' direction of the branch point. Also able to cleave double-stranded flap strand 1 exactly at the branch point. This chain is Flap endonuclease GEN-like 1, found in Arabidopsis thaliana (Mouse-ear cress).